Reading from the N-terminus, the 324-residue chain is Kelch domain-containing protein PF0436 (324 aa).

3 Kelch repeats span residues 112-160, 254-301, and 303-323; these read EVLL…LWDG, GIYI…WDGR, and IYIVGGRGPGPNKYIVIFTPK.

The protein is Kelch domain-containing protein PF0436 of Pyrococcus furiosus (strain ATCC 43587 / DSM 3638 / JCM 8422 / Vc1).